Here is a 326-residue protein sequence, read N- to C-terminus: tRNA dimethylallyltransferase (326 aa).

An ATP-binding site is contributed by G18–S25. Position 20–25 (T20–S25) interacts with substrate. 2 interaction with substrate tRNA regions span residues D43–Q46 and Q167–R171.

It belongs to the IPP transferase family. As to quaternary structure, monomer. Mg(2+) serves as cofactor.

It catalyses the reaction adenosine(37) in tRNA + dimethylallyl diphosphate = N(6)-dimethylallyladenosine(37) in tRNA + diphosphate. Functionally, catalyzes the transfer of a dimethylallyl group onto the adenine at position 37 in tRNAs that read codons beginning with uridine, leading to the formation of N6-(dimethylallyl)adenosine (i(6)A). This is tRNA dimethylallyltransferase from Rhodospirillum rubrum (strain ATCC 11170 / ATH 1.1.1 / DSM 467 / LMG 4362 / NCIMB 8255 / S1).